The sequence spans 227 residues: MAYPFQLGLQDATSPIMEELTNFHDHTLMIVFLISTLVLYIISLMLTTKLTHTSTMDAQEVETIWTILPAVILILIALPSLRILYMMDEINNPVLTVKTMGHQWYWSYEYTDYEDLNFDSYMIPTSDLKPGELRLLEVDNRVVLPMELPIRMLISSEDVLHSWAVPSLGLKTDAIPGRLNQATVTSNRPGLFYGQCSEICGSNHSFMPIVLEMVPLKYFENWSASMI.

Residues 1-14 (MAYPFQLGLQDATS) lie on the Mitochondrial intermembrane side of the membrane. A helical membrane pass occupies residues 15–45 (PIMEELTNFHDHTLMIVFLISTLVLYIISLM). The Mitochondrial matrix segment spans residues 46–59 (LTTKLTHTSTMDAQ). Residues 60–87 (EVETIWTILPAVILILIALPSLRILYMM) form a helical membrane-spanning segment. Residues 88 to 227 (DEINNPVLTV…YFENWSASMI (140 aa)) are Mitochondrial intermembrane-facing. Cu cation is bound by residues H161, C196, E198, C200, H204, and M207. Residue E198 participates in Mg(2+) binding. Phosphotyrosine is present on Y218.

This sequence belongs to the cytochrome c oxidase subunit 2 family. Component of the cytochrome c oxidase (complex IV, CIV), a multisubunit enzyme composed of 14 subunits. The complex is composed of a catalytic core of 3 subunits MT-CO1, MT-CO2 and MT-CO3, encoded in the mitochondrial DNA, and 11 supernumerary subunits COX4I, COX5A, COX5B, COX6A, COX6B, COX6C, COX7A, COX7B, COX7C, COX8 and NDUFA4, which are encoded in the nuclear genome. The complex exists as a monomer or a dimer and forms supercomplexes (SCs) in the inner mitochondrial membrane with NADH-ubiquinone oxidoreductase (complex I, CI) and ubiquinol-cytochrome c oxidoreductase (cytochrome b-c1 complex, complex III, CIII), resulting in different assemblies (supercomplex SCI(1)III(2)IV(1) and megacomplex MCI(2)III(2)IV(2)). Found in a complex with TMEM177, COA6, COX18, COX20, SCO1 and SCO2. Interacts with TMEM177 in a COX20-dependent manner. Interacts with COX20. Interacts with COX16. Cu cation serves as cofactor.

It localises to the mitochondrion inner membrane. The catalysed reaction is 4 Fe(II)-[cytochrome c] + O2 + 8 H(+)(in) = 4 Fe(III)-[cytochrome c] + 2 H2O + 4 H(+)(out). Its function is as follows. Component of the cytochrome c oxidase, the last enzyme in the mitochondrial electron transport chain which drives oxidative phosphorylation. The respiratory chain contains 3 multisubunit complexes succinate dehydrogenase (complex II, CII), ubiquinol-cytochrome c oxidoreductase (cytochrome b-c1 complex, complex III, CIII) and cytochrome c oxidase (complex IV, CIV), that cooperate to transfer electrons derived from NADH and succinate to molecular oxygen, creating an electrochemical gradient over the inner membrane that drives transmembrane transport and the ATP synthase. Cytochrome c oxidase is the component of the respiratory chain that catalyzes the reduction of oxygen to water. Electrons originating from reduced cytochrome c in the intermembrane space (IMS) are transferred via the dinuclear copper A center (CU(A)) of subunit 2 and heme A of subunit 1 to the active site in subunit 1, a binuclear center (BNC) formed by heme A3 and copper B (CU(B)). The BNC reduces molecular oxygen to 2 water molecules using 4 electrons from cytochrome c in the IMS and 4 protons from the mitochondrial matrix. The chain is Cytochrome c oxidase subunit 2 (MT-CO2) from Leopoldamys sabanus (Long-tailed giant rat).